Reading from the N-terminus, the 136-residue chain is Urease subunit beta (136 aa).

A disordered region spans residues 112-136 (ENDEYAGVFGDNGTENVNKKGGKRS).

This sequence belongs to the urease beta subunit family. In terms of assembly, heterotrimer of UreA (gamma), UreB (beta) and UreC (alpha) subunits. Three heterotrimers associate to form the active enzyme.

Its subcellular location is the cytoplasm. The catalysed reaction is urea + 2 H2O + H(+) = hydrogencarbonate + 2 NH4(+). The protein operates within nitrogen metabolism; urea degradation; CO(2) and NH(3) from urea (urease route): step 1/1. The chain is Urease subunit beta from Staphylococcus aureus (strain MRSA252).